Consider the following 159-residue polypeptide: Cyclic pyranopterin monophosphate synthase (159 aa).

Substrate contacts are provided by residues 75–77 and 113–114; these read LCH and ME. Aspartate 128 is a catalytic residue.

The protein belongs to the MoaC family. Homohexamer; trimer of dimers.

The enzyme catalyses (8S)-3',8-cyclo-7,8-dihydroguanosine 5'-triphosphate = cyclic pyranopterin phosphate + diphosphate. Its pathway is cofactor biosynthesis; molybdopterin biosynthesis. Its function is as follows. Catalyzes the conversion of (8S)-3',8-cyclo-7,8-dihydroguanosine 5'-triphosphate to cyclic pyranopterin monophosphate (cPMP). The polypeptide is Cyclic pyranopterin monophosphate synthase (Cereibacter sphaeroides (strain ATCC 17023 / DSM 158 / JCM 6121 / CCUG 31486 / LMG 2827 / NBRC 12203 / NCIMB 8253 / ATH 2.4.1.) (Rhodobacter sphaeroides)).